Consider the following 500-residue polypeptide: Endonuclease domain-containing 1 protein (500 aa).

A signal peptide spans 1 to 21 (MGTARWLALGSLFALAGLLEG). The interval 293–323 (ERMVQSQKSSSPLSSTRSKRSTLLPPEASEG) is disordered. Residues 297–317 (QSQKSSSPLSSTRSKRSTLLP) are compositionally biased toward low complexity. An N6-acetyllysine modification is found at Lys407.

The protein belongs to the DNA/RNA non-specific endonuclease family. Interacts with RNF26; this interaction is important to modulate innate immune signaling through the cGAS-STING pathway.

The protein localises to the secreted. In terms of biological role, may act as a DNase and a RNase. Plays a role in the modulation of innate immune signaling through the cGAS-STING pathway by interacting with RNF26. This is Endonuclease domain-containing 1 protein (ENDOD1) from Homo sapiens (Human).